The sequence spans 221 residues: Ras-related protein Rab-28 (221 aa).

Position 2 is an N-acetylserine (Ser2). At Ser8 the chain carries Phosphoserine. Residues Gly21, Gly24, Lys25, Thr26, Ser27, Gly38, Lys39, Tyr41, and Thr44 each coordinate GTP. Thr26 is a Mg(2+) binding site. Residues 35–49 (ETFGKRYKQTIGLDF) are switch I. The Mg(2+) site is built by Thr44 and Asp68. The switch II stretch occupies residues 68–85 (DIGGQTIGGKMLDKYIYG). GTP is bound by residues Gly71, Asn129, Lys130, Asp132, Ala160, and Lys161. Cys218 bears the Cysteine methyl ester mark. Cys218 carries S-farnesyl cysteine lipidation. Residues 219-221 (AVQ) constitute a propeptide, removed in mature form.

This sequence belongs to the small GTPase superfamily. Rab family. Interacts (prenylated form) with PDE6D; the interaction promotes RAB28 delivery to the photoreceptor outer segments. Interacts with KCNJ13; the interaction may facilitate cone outer segments phagocytosis. Also participates in nuclear factor kappa-B p65/RELA nuclear transport in endothelial cells. Mg(2+) is required as a cofactor. In terms of processing, isoprenylated.

The protein resides in the cell membrane. The protein localises to the cytoplasm. It is found in the cytoskeleton. It localises to the cilium basal body. Its subcellular location is the nucleus. The enzyme catalyses GTP + H2O = GDP + phosphate + H(+). With respect to regulation, regulated by guanine nucleotide exchange factors (GEFs) which promote the exchange of bound GDP for free GTP. Regulated by GTPase activating proteins (GAPs) which increase the GTP hydrolysis activity. Inhibited by GDP dissociation inhibitors (GDIs). Its function is as follows. The small GTPases Rab are key regulators of intracellular membrane trafficking, from the formation of transport vesicles to their fusion with membranes. Rabs cycle between an inactive GDP-bound form and an active GTP-bound form that is able to recruit to membranes different sets of downstream effectors directly responsible for vesicle formation, movement, tethering and fusion. RAB28 is required for shedding and phagocytosis of cone cell outer segments (OS) discs in the retina. Also participates in nuclear factor kappa-B p65/RELA nuclear transport in endothelial cells. The sequence is that of Ras-related protein Rab-28 (RAB28) from Pongo abelii (Sumatran orangutan).